Consider the following 426-residue polypeptide: Serine hydroxymethyltransferase (426 aa).

(6S)-5,6,7,8-tetrahydrofolate-binding positions include L118 and 122-124 (GHL). At K227 the chain carries N6-(pyridoxal phosphate)lysine.

The protein belongs to the SHMT family. In terms of assembly, homodimer. The cofactor is pyridoxal 5'-phosphate.

The protein resides in the cytoplasm. It catalyses the reaction (6R)-5,10-methylene-5,6,7,8-tetrahydrofolate + glycine + H2O = (6S)-5,6,7,8-tetrahydrofolate + L-serine. It functions in the pathway one-carbon metabolism; tetrahydrofolate interconversion. It participates in amino-acid biosynthesis; glycine biosynthesis; glycine from L-serine: step 1/1. Its function is as follows. Catalyzes the reversible interconversion of serine and glycine with tetrahydrofolate (THF) serving as the one-carbon carrier. This reaction serves as the major source of one-carbon groups required for the biosynthesis of purines, thymidylate, methionine, and other important biomolecules. Also exhibits THF-independent aldolase activity toward beta-hydroxyamino acids, producing glycine and aldehydes, via a retro-aldol mechanism. The polypeptide is Serine hydroxymethyltransferase (Mycobacterium avium (strain 104)).